We begin with the raw amino-acid sequence, 145 residues long: Large ribosomal subunit protein uL15 (145 aa).

The disordered stretch occupies residues 1 to 43 (MRLNTIKPGAGSKSAAKRVGRGIGSGLGKTCGRGHKGQKSRAG). The span at 21-31 (RGIGSGLGKTC) shows a compositional bias: gly residues.

The protein belongs to the universal ribosomal protein uL15 family. As to quaternary structure, part of the 50S ribosomal subunit.

In terms of biological role, binds to the 23S rRNA. The sequence is that of Large ribosomal subunit protein uL15 from Aromatoleum aromaticum (strain DSM 19018 / LMG 30748 / EbN1) (Azoarcus sp. (strain EbN1)).